Consider the following 213-residue polypeptide: Thiamine-phosphate synthase (213 aa).

Residues 40–44 (QFREK) and N75 each bind 4-amino-2-methyl-5-(diphosphooxymethyl)pyrimidine. Mg(2+)-binding residues include D76 and D95. S113 contributes to the 4-amino-2-methyl-5-(diphosphooxymethyl)pyrimidine binding site. 139 to 141 (TPS) contributes to the 2-[(2R,5Z)-2-carboxy-4-methylthiazol-5(2H)-ylidene]ethyl phosphate binding site. Residue K142 coordinates 4-amino-2-methyl-5-(diphosphooxymethyl)pyrimidine. 2-[(2R,5Z)-2-carboxy-4-methylthiazol-5(2H)-ylidene]ethyl phosphate is bound by residues G171 and 191–192 (IS).

It belongs to the thiamine-phosphate synthase family. The cofactor is Mg(2+).

It carries out the reaction 2-[(2R,5Z)-2-carboxy-4-methylthiazol-5(2H)-ylidene]ethyl phosphate + 4-amino-2-methyl-5-(diphosphooxymethyl)pyrimidine + 2 H(+) = thiamine phosphate + CO2 + diphosphate. The catalysed reaction is 2-(2-carboxy-4-methylthiazol-5-yl)ethyl phosphate + 4-amino-2-methyl-5-(diphosphooxymethyl)pyrimidine + 2 H(+) = thiamine phosphate + CO2 + diphosphate. It catalyses the reaction 4-methyl-5-(2-phosphooxyethyl)-thiazole + 4-amino-2-methyl-5-(diphosphooxymethyl)pyrimidine + H(+) = thiamine phosphate + diphosphate. The protein operates within cofactor biosynthesis; thiamine diphosphate biosynthesis; thiamine phosphate from 4-amino-2-methyl-5-diphosphomethylpyrimidine and 4-methyl-5-(2-phosphoethyl)-thiazole: step 1/1. Condenses 4-methyl-5-(beta-hydroxyethyl)thiazole monophosphate (THZ-P) and 2-methyl-4-amino-5-hydroxymethyl pyrimidine pyrophosphate (HMP-PP) to form thiamine monophosphate (TMP). This is Thiamine-phosphate synthase from Staphylococcus aureus (strain MSSA476).